The following is a 414-amino-acid chain: Dihydroorotase (414 aa).

Residues H57 and H59 each contribute to the Zn(2+) site. Residues 59-61 and N91 contribute to the substrate site; that span reads HLR. Positions 135, 164, 204, and 272 each coordinate Zn(2+). K135 is subject to N6-carboxylysine. The active site involves D272. Residues H276 and 286–287 contribute to the substrate site; that span reads AG.

Belongs to the metallo-dependent hydrolases superfamily. DHOase family. Class I DHOase subfamily. Requires Zn(2+) as cofactor.

It carries out the reaction (S)-dihydroorotate + H2O = N-carbamoyl-L-aspartate + H(+). The protein operates within pyrimidine metabolism; UMP biosynthesis via de novo pathway; (S)-dihydroorotate from bicarbonate: step 3/3. Catalyzes the reversible cyclization of carbamoyl aspartate to dihydroorotate. This Pyrococcus furiosus (strain ATCC 43587 / DSM 3638 / JCM 8422 / Vc1) protein is Dihydroorotase.